We begin with the raw amino-acid sequence, 306 residues long: Peroxisome biogenesis factor 2 (306 aa).

At 1–15 (MAASENNMEEINPVL) the chain is on the peroxisomal matrix side. The helical transmembrane segment at 16–42 (RISQLDAIELNKALEQLIWSQFSSCFQ) threads the bilayer. Residues 43–48 (GFKPGL) lie on the Cytoplasmic side of the membrane. A helical transmembrane segment spans residues 49–74 (LTRFEPEIKASLCLFLWRYTIYTKNA). Residues 75–98 (TVGQTILNMQYKNDLAVTKKYRPL) are Peroxisomal matrix-facing. The helical transmembrane segment at 99–125 (NKQQKVWFALFLVGGKWLEERSFDLFS) threads the bilayer. The Cytoplasmic segment spans residues 126-134 (NHPFGASFQ). A helical transmembrane segment spans residues 135–161 (RTKYFLNAISGLLKFGALLNFLIFLQQ). The Peroxisomal matrix segment spans residues 162 to 188 (GKFATLTERLLGIRSVFSRPQDVRQVG). Residues 189 to 212 (FEYMNREILWHGFAEFLIFLLPLI) traverse the membrane as a helical segment. Topologically, residues 213–306 (NTQKLKSKLF…KIEISEVHTL (94 aa)) are cytoplasmic. Zn(2+) contacts are provided by Cys-245, Cys-248, Cys-260, His-262, Cys-265, Cys-268, Cys-281, and Cys-284. An RING-type zinc finger spans residues 245-285 (CCLCGEWPAMPHTIGCSHVFCYYCIKSNYMSDMYFTCPKCS).

Belongs to the pex2/pex10/pex12 family. As to quaternary structure, component of the PEX2-PEX10-PEX12 retrotranslocation channel.

The protein localises to the peroxisome membrane. The enzyme catalyses [E2 ubiquitin-conjugating enzyme]-S-ubiquitinyl-L-cysteine + [acceptor protein]-L-cysteine = [E2 ubiquitin-conjugating enzyme]-L-cysteine + [acceptor protein]-S-ubiquitinyl-L-cysteine.. It catalyses the reaction S-ubiquitinyl-[E2 ubiquitin-conjugating enzyme]-L-cysteine + [acceptor protein]-L-lysine = [E2 ubiquitin-conjugating enzyme]-L-cysteine + N(6)-ubiquitinyl-[acceptor protein]-L-lysine.. It functions in the pathway protein modification; protein ubiquitination. In terms of biological role, E3 ubiquitin-protein ligase component of a retrotranslocation channel required for peroxisome organization by mediating export of the PEX5 receptor from peroxisomes to the cytosol, thereby promoting PEX5 recycling. The retrotranslocation channel is composed of PEX2, PEX10 and PEX12; each subunit contributing transmembrane segments that coassemble into an open channel that specifically allows the passage of PEX5 through the peroxisomal membrane. PEX2 also regulates peroxisome organization by acting as a E3 ubiquitin-protein ligase. This is Peroxisome biogenesis factor 2 from Xenopus laevis (African clawed frog).